The following is a 100-amino-acid chain: Large ribosomal subunit protein uL23 (100 aa).

The protein belongs to the universal ribosomal protein uL23 family. In terms of assembly, part of the 50S ribosomal subunit. Contacts protein L29, and trigger factor when it is bound to the ribosome.

One of the early assembly proteins it binds 23S rRNA. One of the proteins that surrounds the polypeptide exit tunnel on the outside of the ribosome. Forms the main docking site for trigger factor binding to the ribosome. This Shewanella oneidensis (strain ATCC 700550 / JCM 31522 / CIP 106686 / LMG 19005 / NCIMB 14063 / MR-1) protein is Large ribosomal subunit protein uL23.